Consider the following 938-residue polypeptide: AP-2 complex subunit alpha-2 (938 aa).

Residues Arg11–Gly12, Lys43, Tyr53, and Lys57–Lys61 each bind a 1,2-diacyl-sn-glycero-3-phospho-(1D-myo-inositol-3,4,5-trisphosphate). Positions Leu615–Gly681 are disordered. Residues Pro646–Val667 are compositionally biased toward low complexity. A compositionally biased stretch (pro residues) spans Pro668–Ser677.

Belongs to the adaptor complexes large subunit family. As to quaternary structure, adaptor protein complex 2 (AP-2) is a heterotetramer composed of two large adaptins (alpha-type subunit AP2A1 or AP2A2 and beta-type subunit AP2B1), a medium adaptin (mu-type subunit AP2M1) and a small adaptin (sigma-type subunit AP2S1). Interacts with clathrin. Binds EPN1, EPS15, AMPH, SNAP91 and BIN1. Interacts with HIP1. Interacts with DGKD. Interacts with DENND1A, DENND1B and DENND1C. Interacts with FCHO1 and DAB2. Interacts with ATAT1; this interaction is required for efficient alpha-tubulin acetylation by ATAT1. Interacts with KIAA1107. Together with AP2B1 and AP2M1, it interacts with ADAM10; this interaction facilitates ADAM10 endocytosis from the plasma membrane during long-term potentiation in hippocampal neurons. Interacts with CLN3 (via dileucine motif). Interacts with ABCB11; this interaction regulates cell membrane expression of ABCB11 through its internalization in a clathrin-dependent manner and its subsequent degradation. Interacts with Cacfd1. Interacts with DNAJC6. In terms of tissue distribution, widely expressed.

The protein resides in the cell membrane. It is found in the membrane. It localises to the coated pit. In terms of biological role, component of the adaptor protein complex 2 (AP-2). Adaptor protein complexes function in protein transport via transport vesicles in different membrane traffic pathways. Adaptor protein complexes are vesicle coat components and appear to be involved in cargo selection and vesicle formation. AP-2 is involved in clathrin-dependent endocytosis in which cargo proteins are incorporated into vesicles surrounded by clathrin (clathrin-coated vesicles, CCVs) which are destined for fusion with the early endosome. The clathrin lattice serves as a mechanical scaffold but is itself unable to bind directly to membrane components. Clathrin-associated adaptor protein (AP) complexes which can bind directly to both the clathrin lattice and to the lipid and protein components of membranes are considered to be the major clathrin adaptors contributing the CCV formation. AP-2 also serves as a cargo receptor to selectively sort the membrane proteins involved in receptor-mediated endocytosis. AP-2 seems to play a role in the recycling of synaptic vesicle membranes from the presynaptic surface. AP-2 recognizes Y-X-X-[FILMV] (Y-X-X-Phi) and [ED]-X-X-X-L-[LI] endocytosis signal motifs within the cytosolic tails of transmembrane cargo molecules. AP-2 may also play a role in maintaining normal post-endocytic trafficking through the ARF6-regulated, non-clathrin pathway. During long-term potentiation in hippocampal neurons, AP-2 is responsible for the endocytosis of ADAM10. The AP-2 alpha subunit binds polyphosphoinositide-containing lipids, positioning AP-2 on the membrane. The AP-2 alpha subunit acts via its C-terminal appendage domain as a scaffolding platform for endocytic accessory proteins. The AP-2 alpha and AP-2 sigma subunits are thought to contribute to the recognition of the [ED]-X-X-X-L-[LI] motif. The polypeptide is AP-2 complex subunit alpha-2 (Rattus norvegicus (Rat)).